The following is a 198-amino-acid chain: Inositol diphosphatase DSP4 (198 aa).

Residues 1-23 (MTLESYAGDVHTVPQSENSMEER) form a disordered region. The 155-residue stretch at 34–188 (NFAMVDNGIF…LKHTPLSFSC (155 aa)) folds into the Tyrosine-protein phosphatase domain. The interval 90 to 102 (FGIERCKEPFVNI) is WPD loop important for active site topology. Positions 101 and 102 each coordinate 1D-myo-inositol hexakisphosphate. Catalysis depends on Cys-126, which acts as the Phosphocysteine intermediate.

Belongs to the protein-tyrosine phosphatase family. Atypical dual-specificity phosphatase Siw14-like subfamily. In terms of tissue distribution, highly expressed in flowers and at lower levels in roots, leaves, stems and siliques.

It catalyses the reaction 5-diphospho-1D-myo-inositol 1,2,3,4,6-pentakisphosphate + H2O = 1D-myo-inositol hexakisphosphate + phosphate + H(+). The catalysed reaction is 1,5-bis(diphospho)-1D-myo-inositol 2,3,4,6-tetrakisphosphate + H2O = 1-diphospho-1D-myo-inositol 2,3,4,5,6-pentakisphosphate + phosphate + 2 H(+). It carries out the reaction 3,5-bis(diphospho)-1D-myo-inositol 1,2,4,6-tetrakisphosphate + H2O = 3-diphospho-1D-myo-inositol 1,2,4,5,6-pentakisphosphate + phosphate + 2 H(+). The enzyme catalyses 6-diphospho-1D-myo-inositol pentakisphosphate + H2O = 1D-myo-inositol hexakisphosphate + phosphate + H(+). Cleaves the beta-phosphate at the 5-position of soluble inositol pyrophosphates. Has highest activity on 5-diphosphoinositol 1,2,3,4,6-pentakisphosphate (5-InsP(7)), 1,5-bis-diphosphoinositol 2,3,4,6-tetrakisphosphate (1,5-InsP(8)) and 3,5-InsP(8). Acts as a negative regulator of defense responses against the bacterial pathogen Pseudomonas syringae pv tomato strain DC3000. This chain is Inositol diphosphatase DSP4, found in Arabidopsis thaliana (Mouse-ear cress).